Consider the following 323-residue polypeptide: Cyclin-D5-1 (323 aa).

2 disordered regions span residues E17–P36 and H281–L323.

Belongs to the cyclin family. Cyclin D subfamily.

The sequence is that of Cyclin-D5-1 (CYCD5-1) from Arabidopsis thaliana (Mouse-ear cress).